We begin with the raw amino-acid sequence, 419 residues long: UDP-N-acetylglucosamine 1-carboxyvinyltransferase (419 aa).

Phosphoenolpyruvate is bound at residue 22–23; it reads KN. R93 contacts UDP-N-acetyl-alpha-D-glucosamine. C117 functions as the Proton donor in the catalytic mechanism. C117 is modified (2-(S-cysteinyl)pyruvic acid O-phosphothioketal). UDP-N-acetyl-alpha-D-glucosamine-binding residues include D307 and I329.

This sequence belongs to the EPSP synthase family. MurA subfamily.

Its subcellular location is the cytoplasm. It carries out the reaction phosphoenolpyruvate + UDP-N-acetyl-alpha-D-glucosamine = UDP-N-acetyl-3-O-(1-carboxyvinyl)-alpha-D-glucosamine + phosphate. It participates in cell wall biogenesis; peptidoglycan biosynthesis. Functionally, cell wall formation. Adds enolpyruvyl to UDP-N-acetylglucosamine. This is UDP-N-acetylglucosamine 1-carboxyvinyltransferase from Shewanella frigidimarina (strain NCIMB 400).